A 541-amino-acid polypeptide reads, in one-letter code: Imidazole glycerol phosphate synthase hisHF (541 aa).

The region spanning 2–214 (IVSIVDYGSG…LTGNYEQPIS (213 aa)) is the Glutamine amidotransferase type-1 domain. Residues C80, H189, and E191 each act as for GATase activity in the active site. The tract at residues 228–541 (LTKRIIACLD…LAIHDVLVRT (314 aa)) is cyclase. Residues D237 and D396 contribute to the active site.

The protein in the C-terminal section; belongs to the HisA/HisF family.

It carries out the reaction 5-[(5-phospho-1-deoxy-D-ribulos-1-ylimino)methylamino]-1-(5-phospho-beta-D-ribosyl)imidazole-4-carboxamide + L-glutamine = D-erythro-1-(imidazol-4-yl)glycerol 3-phosphate + 5-amino-1-(5-phospho-beta-D-ribosyl)imidazole-4-carboxamide + L-glutamate + H(+). The enzyme catalyses L-glutamine + H2O = L-glutamate + NH4(+). Its pathway is amino-acid biosynthesis; L-histidine biosynthesis; L-histidine from 5-phospho-alpha-D-ribose 1-diphosphate: step 5/9. In terms of biological role, IGPS catalyzes the conversion of PRFAR and glutamine to IGP, AICAR and glutamate. The glutaminase domain produces the ammonia necessary for the cyclase domain to produce IGP and AICAR from PRFAR. The ammonia is channeled to the active site of the cyclase domain. The sequence is that of Imidazole glycerol phosphate synthase hisHF (his4) from Schizosaccharomyces pombe (strain 972 / ATCC 24843) (Fission yeast).